The chain runs to 183 residues: uncharacterized protein (183 aa).

The protein belongs to the asfivirus S183L family.

This is an uncharacterized protein from Ornithodoros (relapsing fever ticks).